Here is a 211-residue protein sequence, read N- to C-terminus: MNSKDCVVIGIAGASASGKSLIAKTIYEELCRDLGTDQIGVIAEDAYYRDQGHLSMDQRVLTNYDHPKALDHELLCSHLRELKAGNAVDIPVYSYTEHTRTDEKVTLTPKKVIILEGILLLTDPALRKEMDASVFMDTPLDICFMRRLSRDVAERGRTMQSVMSQYTETVRPMFLQFIEPSKQYADIIVPRGGKNRIATDILKARIQHLLA.

ATP is bound at residue 13-20 (GASASGKS).

The protein belongs to the uridine kinase family.

The protein resides in the cytoplasm. It carries out the reaction uridine + ATP = UMP + ADP + H(+). The catalysed reaction is cytidine + ATP = CMP + ADP + H(+). The protein operates within pyrimidine metabolism; CTP biosynthesis via salvage pathway; CTP from cytidine: step 1/3. It functions in the pathway pyrimidine metabolism; UMP biosynthesis via salvage pathway; UMP from uridine: step 1/1. The sequence is that of Uridine kinase from Shewanella pealeana (strain ATCC 700345 / ANG-SQ1).